The following is a 933-amino-acid chain: Probable Rho-type GTPase-activating protein 4 (933 aa).

LIM zinc-binding domains are found at residues Cys22–Asp80 and Ile81–Cys129. Disordered regions lie at residues Pro181 to Arg200 and Glu304 to Thr338. A compositionally biased stretch (polar residues) spans Arg325–Thr338. The residue at position 353 (Ser353) is a Phosphoserine. Disordered regions lie at residues Arg415–Ala435, Ser605–Glu628, and Gly641–Ser660. Polar residues predominate over residues Arg619–Glu628. Ser625 bears the Phosphoserine mark. The span at Arg643–Ser652 shows a compositional bias: basic and acidic residues. 2 positions are modified to phosphoserine: Ser738 and Ser740. One can recognise a Rho-GAP domain in the interval Asn753 to Phe932.

Functionally, GTPase-activating protein for Rho-type proteins. The polypeptide is Probable Rho-type GTPase-activating protein 4 (rga4) (Schizosaccharomyces pombe (strain 972 / ATCC 24843) (Fission yeast)).